Here is a 188-residue protein sequence, read N- to C-terminus: dCTP deaminase (188 aa).

Residues 111–116 (KSTYAR), 135–137 (TLE), Gln156, Tyr170, and Gln180 each bind dCTP. Glu137 serves as the catalytic Proton donor/acceptor.

This sequence belongs to the dCTP deaminase family. Homotrimer.

The enzyme catalyses dCTP + H2O + H(+) = dUTP + NH4(+). It participates in pyrimidine metabolism; dUMP biosynthesis; dUMP from dCTP (dUTP route): step 1/2. Its function is as follows. Catalyzes the deamination of dCTP to dUTP. In Ectopseudomonas mendocina (strain ymp) (Pseudomonas mendocina), this protein is dCTP deaminase.